Here is a 361-residue protein sequence, read N- to C-terminus: 5-formaminoimidazole-4-carboxamide-1-(beta)-D-ribofuranosyl 5'-monophosphate synthetase (361 aa).

Residues His27 and Ser94 each coordinate 5-amino-1-(5-phospho-beta-D-ribosyl)imidazole-4-carboxamide. The ATP-grasp domain maps to 116-348 (RAILRWEAER…MGQRIAKEIK (233 aa)). ATP-binding positions include 146 to 208 (PDDI…ANYC) and Glu230. Asn258 contacts 5-amino-1-(5-phospho-beta-D-ribosyl)imidazole-4-carboxamide. 2 residues coordinate Mg(2+): Gln297 and Glu310.

The protein belongs to the phosphohexose mutase family. Mg(2+) serves as cofactor. Requires Mn(2+) as cofactor.

It catalyses the reaction 5-amino-1-(5-phospho-beta-D-ribosyl)imidazole-4-carboxamide + formate + ATP = 5-formamido-1-(5-phospho-D-ribosyl)imidazole-4-carboxamide + ADP + phosphate. It participates in purine metabolism; IMP biosynthesis via de novo pathway; 5-formamido-1-(5-phospho-D-ribosyl)imidazole-4-carboxamide from 5-amino-1-(5-phospho-D-ribosyl)imidazole-4-carboxamide (formate route): step 1/1. Catalyzes the ATP- and formate-dependent formylation of 5-aminoimidazole-4-carboxamide-1-beta-d-ribofuranosyl 5'-monophosphate (AICAR) to 5-formaminoimidazole-4-carboxamide-1-beta-d-ribofuranosyl 5'-monophosphate (FAICAR) in the absence of folates. This Methanococcus maripaludis (strain C5 / ATCC BAA-1333) protein is 5-formaminoimidazole-4-carboxamide-1-(beta)-D-ribofuranosyl 5'-monophosphate synthetase.